The primary structure comprises 115 residues: NADH-ubiquinone oxidoreductase chain 3 (115 aa).

3 helical membrane-spanning segments follow: residues Leu-4–Leu-24, Phe-55–Leu-75, and Val-86–Trp-106.

The protein belongs to the complex I subunit 3 family. As to quaternary structure, core subunit of respiratory chain NADH dehydrogenase (Complex I) which is composed of 45 different subunits. Interacts with TMEM186. Interacts with TMEM242.

Its subcellular location is the mitochondrion inner membrane. The catalysed reaction is a ubiquinone + NADH + 5 H(+)(in) = a ubiquinol + NAD(+) + 4 H(+)(out). In terms of biological role, core subunit of the mitochondrial membrane respiratory chain NADH dehydrogenase (Complex I) which catalyzes electron transfer from NADH through the respiratory chain, using ubiquinone as an electron acceptor. Essential for the catalytic activity of complex I. In Isthmomys pirrensis (Mount Pirri Isthmus rat), this protein is NADH-ubiquinone oxidoreductase chain 3.